We begin with the raw amino-acid sequence, 247 residues long: PF03932 family protein CutC (247 aa).

It belongs to the CutC family.

The protein localises to the cytoplasm. The protein is PF03932 family protein CutC of Chromobacterium violaceum (strain ATCC 12472 / DSM 30191 / JCM 1249 / CCUG 213 / NBRC 12614 / NCIMB 9131 / NCTC 9757 / MK).